Reading from the N-terminus, the 1004-residue chain is MSRRKQRRPQQLISDCEGPSASENGDASEEDHPQVCAKCCAQFSDPTEFLAHQNSCCTDPPVMVIIGGQENPSNSSASSAPRPEGHSRSQVMDTEHSNPPDSGSSGAPDPTWGPERRGEESSGQFLVAATGTAAGGGGGLILASPKLGATPLPPESTPAPPPPPPPPPPPGVGSGHLNIPLILEELRVLQQRQIHQMQMTEQICRQVLLLGSLGQTVGAPASPSELPGTGAASSTKPLLPLFSPIKPAQTGKTLASSSSSSSSSGAEPPKQAFFHLYHPLGSQHPFSVGGVGRSHKPTPAPSPALPGSTDQLIASPHLAFPGTTGLLAAQCLGAARGLEAAASPGLLKPKNGSGELGYGEVISSLEKPGGRHKCRFCAKVFGSDSALQIHLRSHTGERPYKCNVCGNRFTTRGNLKVHFHRHREKYPHVQMNPHPVPEHLDYVITSSGLPYGMSVPPEKAEEEAGTPGGGVERKPLVASTTALSATESLTLLSTGTSTAVAPGLPTFNKFVLMKAVEPKSKADENTPPGSEGSAIAGVADSGSATRMQLSKLVTSLPSWALLTNHLKSTGSFPFPYVLEPLGASPSETSKLQQLVEKIDRQGAVAVASTASGAPTTSAPAPSSSASGPNQCVICLRVLSCPRALRLHYGQHGGERPFKCKVCGRAFSTRGNLRAHFVGHKTSPAARAQNSCPICQKKFTNAVTLQQHVRMHLGGQIPNGGSALSEGGGAAQENSSEQSTASGPGSFPQPQSQQPSPEEEMSEEEEEDEEEEEDVTDEDSLAGRGSESGGEKAISVRGDSEEVSGAEEEVATSVAAPTTVKEMDSNEKAPQHTLPPPPPPPDNLDHPQPMEQGTSDVSGAMEEEAKLEGTSSPMAALTQEGEGTSTPLVEELNLPEAMKKDPGESSGRKACEVCGQSFPTQTALEEHQKTHPKDGPLFTCVFCRQGFLDRATLKKHMLLAHHQVPPFAPHGPQNIATLSLVPGCSSSIPSPGLSPFPRKDDPTMP.

5 disordered regions span residues 1 to 33 (MSRR…EDHP), 51 to 122 (AHQN…EESS), 137 to 177 (GGGL…SGHL), 220 to 270 (PASP…EPPK), and 285 to 307 (PFSV…ALPG). The C2H2-type 1; atypical zinc-finger motif lies at 34–56 (QVCAKCCAQFSDPTEFLAHQNSC). The span at 71 to 81 (NPSNSSASSAP) shows a compositional bias: low complexity. The span at 83 to 98 (PEGHSRSQVMDTEHSN) shows a compositional bias: basic and acidic residues. Residues 99 to 110 (PPDSGSSGAPDP) are compositionally biased toward low complexity. The segment covering 151 to 171 (PLPPESTPAPPPPPPPPPPPG) has biased composition (pro residues). At serine 243 the chain carries Phosphoserine. 5 consecutive C2H2-type zinc fingers follow at residues 372 to 394 (HKCR…LRSH), 400 to 422 (YKCN…FHRH), 629 to 651 (NQCV…YGQH), 657 to 679 (FKCK…FVGH), and 689 to 711 (NSCP…VRMH). The tract at residues 712 to 910 (LGGQIPNGGS…PGESSGRKAC (199 aa)) is disordered. Polar residues predominate over residues 731 to 742 (QENSSEQSTASG). The span at 756 to 779 (PEEEMSEEEEEDEEEEEDVTDEDS) shows a compositional bias: acidic residues. 3 positions are modified to phosphoserine: serine 794, serine 799, and serine 803. Over residues 800 to 809 (EEVSGAEEEV) the composition is skewed to acidic residues. Residues 810–819 (ATSVAAPTTV) are compositionally biased toward low complexity. Positions 820 to 829 (KEMDSNEKAP) are enriched in basic and acidic residues. The span at 832 to 841 (TLPPPPPPPD) shows a compositional bias: pro residues. Basic and acidic residues predominate over residues 896 to 910 (AMKKDPGESSGRKAC). Lysine 908 is covalently cross-linked (Glycyl lysine isopeptide (Lys-Gly) (interchain with G-Cter in ubiquitin)). 2 C2H2-type zinc fingers span residues 908–930 (KACE…QKTH) and 937–961 (FTCV…LAHH).

It belongs to the sal C2H2-type zinc-finger protein family. Expressed throughout embryonic development. In adult predominantly in brain.

The protein resides in the nucleus. Probable transcription factor that plays a role in eye development before, during, and after optic fissure closure. The sequence is that of Sal-like protein 2 (Sall2) from Mus musculus (Mouse).